The following is a 195-amino-acid chain: MKLLCGFFLLWLGLVGNLAQSDPSPKEEESYSDWGLRQLRGSFESVNSYVDSFMELLGGKNGVCQYRCRYGKAPMPRPGYKAQEPNGCSSYFLGIKVPGSMDLGIPAMTKCCNQLDVCYDTCGANKYRCDAKFRWCLHSICSDLKRTLGFVSNVEAACDSLADTVFNTVWTLGCRPFMNSQRAACICAEEEKEEL.

The first 19 residues, Met1–Ala19, serve as a signal peptide directing secretion. Positions 89, 91, 93, and 116 each coordinate Ca(2+).

Belongs to the phospholipase A2 family. The cofactor is Ca(2+).

It localises to the secreted. In terms of biological role, not known; does not seem to have catalytic activity. In Mus musculus (Mouse), this protein is Group XIIB secretory phospholipase A2-like protein (Pla2g12b).